The following is a 187-amino-acid chain: Large ribosomal subunit protein eL18y (187 aa).

The segment at 151–187 (FGPAPGVPHSHSKPYVRAKGRKFEKARGKRKSRGFKV) is disordered. Basic residues-rich tracts occupy residues 160–170 (SHSKPYVRAKG) and 177–187 (RGKRKSRGFKV).

The protein belongs to the eukaryotic ribosomal protein eL18 family. In terms of assembly, interacts with NIK1. Interacts directly with EXA1. In terms of tissue distribution, ubiquitous.

Its subcellular location is the cytoplasm. The sequence is that of Large ribosomal subunit protein eL18y (RPL18B) from Arabidopsis thaliana (Mouse-ear cress).